Here is a 501-residue protein sequence, read N- to C-terminus: Aluminum-activated malate transporter 2 (501 aa).

6 helical membrane passes run Val-22–Gln-42, Ala-52–Gly-72, Ala-78–Ser-98, Thr-101–Val-121, Arg-130–Phe-150, and Val-166–Gly-186. The tract at residues Phe-398–Asp-425 is disordered.

The protein belongs to the aromatic acid exporter (TC 2.A.85) family.

The protein localises to the membrane. In terms of biological role, malate transporter. The sequence is that of Aluminum-activated malate transporter 2 (ALMT2) from Arabidopsis thaliana (Mouse-ear cress).